The sequence spans 142 residues: Hemoglobin subunit alpha-2 (142 aa).

One can recognise a Globin domain in the interval 2-142; the sequence is VLSAADKTNV…VSTVLTSKYR (141 aa). H59 serves as a coordination point for O2. Position 88 (H88) interacts with heme b.

This sequence belongs to the globin family. Heterotetramer of two alpha chains and two beta chains. As to expression, red blood cells.

Functionally, involved in oxygen transport from the lung to the various peripheral tissues. In terms of biological role, hemopressin acts as an antagonist peptide of the cannabinoid receptor CNR1. Hemopressin-binding efficiently blocks cannabinoid receptor CNR1 and subsequent signaling. The protein is Hemoglobin subunit alpha-2 (HBA2) of Equus quagga burchellii (Burchell's zebra).